Consider the following 176-residue polypeptide: Ribosome maturation factor RimM (176 aa).

A PRC barrel domain is found at 96-176 (PEDEFYWRDL…QILVDWDPDF (81 aa)).

It belongs to the RimM family. Binds ribosomal protein uS19.

Its subcellular location is the cytoplasm. Its function is as follows. An accessory protein needed during the final step in the assembly of 30S ribosomal subunit, possibly for assembly of the head region. Essential for efficient processing of 16S rRNA. May be needed both before and after RbfA during the maturation of 16S rRNA. It has affinity for free ribosomal 30S subunits but not for 70S ribosomes. The chain is Ribosome maturation factor RimM from Shewanella piezotolerans (strain WP3 / JCM 13877).